We begin with the raw amino-acid sequence, 455 residues long: Bifunctional protein GlmU (455 aa).

The tract at residues 1-230 (MSNRFAVILA…VEETLGVNDR (230 aa)) is pyrophosphorylase. Residues 9–12 (LAAG), Lys-23, Gln-73, and 78–79 (GT) each bind UDP-N-acetyl-alpha-D-glucosamine. Asp-103 serves as a coordination point for Mg(2+). The UDP-N-acetyl-alpha-D-glucosamine site is built by Gly-140, Glu-155, Asn-170, and Asn-228. Position 228 (Asn-228) interacts with Mg(2+). The interval 231–251 (VALAQAEQVMKRRINEAWMRK) is linker. The segment at 252–455 (GVTFIDPEQT…KEHYVTKKNN (204 aa)) is N-acetyltransferase. Positions 333 and 351 each coordinate UDP-N-acetyl-alpha-D-glucosamine. The active-site Proton acceptor is His-363. Residues Tyr-366 and Asn-377 each contribute to the UDP-N-acetyl-alpha-D-glucosamine site. Acetyl-CoA is bound by residues 386–387 (NY), Ala-423, and Arg-440.

This sequence in the N-terminal section; belongs to the N-acetylglucosamine-1-phosphate uridyltransferase family. In the C-terminal section; belongs to the transferase hexapeptide repeat family. Homotrimer. Mg(2+) serves as cofactor.

Its subcellular location is the cytoplasm. It carries out the reaction alpha-D-glucosamine 1-phosphate + acetyl-CoA = N-acetyl-alpha-D-glucosamine 1-phosphate + CoA + H(+). The catalysed reaction is N-acetyl-alpha-D-glucosamine 1-phosphate + UTP + H(+) = UDP-N-acetyl-alpha-D-glucosamine + diphosphate. It functions in the pathway nucleotide-sugar biosynthesis; UDP-N-acetyl-alpha-D-glucosamine biosynthesis; N-acetyl-alpha-D-glucosamine 1-phosphate from alpha-D-glucosamine 6-phosphate (route II): step 2/2. The protein operates within nucleotide-sugar biosynthesis; UDP-N-acetyl-alpha-D-glucosamine biosynthesis; UDP-N-acetyl-alpha-D-glucosamine from N-acetyl-alpha-D-glucosamine 1-phosphate: step 1/1. It participates in bacterial outer membrane biogenesis; LPS lipid A biosynthesis. Catalyzes the last two sequential reactions in the de novo biosynthetic pathway for UDP-N-acetylglucosamine (UDP-GlcNAc). The C-terminal domain catalyzes the transfer of acetyl group from acetyl coenzyme A to glucosamine-1-phosphate (GlcN-1-P) to produce N-acetylglucosamine-1-phosphate (GlcNAc-1-P), which is converted into UDP-GlcNAc by the transfer of uridine 5-monophosphate (from uridine 5-triphosphate), a reaction catalyzed by the N-terminal domain. This Halalkalibacterium halodurans (strain ATCC BAA-125 / DSM 18197 / FERM 7344 / JCM 9153 / C-125) (Bacillus halodurans) protein is Bifunctional protein GlmU.